The following is a 174-amino-acid chain: FITAAFGIPQISTGDMLRAAIKAGTPLGLEAKKIIDEGGLVRDDIIIGMVKERIAQDDCKNGFLFDGFPRTLAQAEAMVEAGVDLDAVVEIDVPDSVIVDRMSGRRVHLASGRTYHIAYNPPKVEGKDDVTGEDLIQRDDDKEETVKKRLDVYHGQTEVLVGFYSKLTGEHAPK.

The NMP stretch occupies residues 12–41 (STGDMLRAAIKAGTPLGLEAKKIIDEGGLV). AMP is bound by residues threonine 13, arginine 18, 39–41 (GLV), 67–70 (GFPR), and glutamine 74. Residues 104-141 (GRRVHLASGRTYHIAYNPPKVEGKDDVTGEDLIQRDDD) form an LID region. Residues arginine 105 and 114–115 (TY) contribute to the ATP site. AMP is bound by residues arginine 138 and arginine 149.

Belongs to the adenylate kinase family. Monomer.

Its subcellular location is the cytoplasm. It carries out the reaction AMP + ATP = 2 ADP. The protein operates within purine metabolism; AMP biosynthesis via salvage pathway; AMP from ADP: step 1/1. Catalyzes the reversible transfer of the terminal phosphate group between ATP and AMP. Plays an important role in cellular energy homeostasis and in adenine nucleotide metabolism. The protein is Adenylate kinase of Neisseria animalis.